A 233-amino-acid polypeptide reads, in one-letter code: Urease accessory protein UreF (233 aa).

The protein belongs to the UreF family. As to quaternary structure, ureD, UreF and UreG form a complex that acts as a GTP-hydrolysis-dependent molecular chaperone, activating the urease apoprotein by helping to assemble the nickel containing metallocenter of UreC. The UreE protein probably delivers the nickel.

It is found in the cytoplasm. Required for maturation of urease via the functional incorporation of the urease nickel metallocenter. In Polaromonas sp. (strain JS666 / ATCC BAA-500), this protein is Urease accessory protein UreF.